Consider the following 245-residue polypeptide: Ribonuclease 3 (245 aa).

Residues 19–148 form the RNase III domain; the sequence is FKVFQEKIGI…FIGALYLDQG (130 aa). Mg(2+) is bound at residue Glu61. Asp65 is a catalytic residue. Mg(2+) is bound by residues Asp134 and Glu137. The active site involves Glu137. The DRBM domain maps to 174 to 243; the sequence is DYKSQLQELI…AAEALKKLKE (70 aa).

Belongs to the ribonuclease III family. Homodimer. Mg(2+) serves as cofactor.

Its subcellular location is the cytoplasm. It carries out the reaction Endonucleolytic cleavage to 5'-phosphomonoester.. Digests double-stranded RNA. Involved in the processing of primary rRNA transcript to yield the immediate precursors to the large and small rRNAs (23S and 16S). Processes some mRNAs, and tRNAs when they are encoded in the rRNA operon. Processes pre-crRNA and tracrRNA of type II CRISPR loci if present in the organism. The protein is Ribonuclease 3 of Bacillus cereus (strain ATCC 14579 / DSM 31 / CCUG 7414 / JCM 2152 / NBRC 15305 / NCIMB 9373 / NCTC 2599 / NRRL B-3711).